Reading from the N-terminus, the 233-residue chain is 2,3,4,5-tetrahydropyridine-2,6-dicarboxylate N-acetyltransferase (233 aa).

It belongs to the transferase hexapeptide repeat family. DapH subfamily.

It carries out the reaction (S)-2,3,4,5-tetrahydrodipicolinate + acetyl-CoA + H2O = L-2-acetamido-6-oxoheptanedioate + CoA. It participates in amino-acid biosynthesis; L-lysine biosynthesis via DAP pathway; LL-2,6-diaminopimelate from (S)-tetrahydrodipicolinate (acetylase route): step 1/3. Its function is as follows. Catalyzes the transfer of an acetyl group from acetyl-CoA to tetrahydrodipicolinate. The polypeptide is 2,3,4,5-tetrahydropyridine-2,6-dicarboxylate N-acetyltransferase (Thermotoga petrophila (strain ATCC BAA-488 / DSM 13995 / JCM 10881 / RKU-1)).